Reading from the N-terminus, the 321-residue chain is L-lactate dehydrogenase (321 aa).

NAD(+) is bound by residues Val-19, Asp-40, Lys-45, Tyr-71, and 85–86 (GA). Substrate contacts are provided by residues Gln-88, Arg-94, and 126-129 (NPVD). Residues 124–126 (ATN) and Ser-149 each bind NAD(+). Substrate is bound at residue 154–157 (DTAR). Residues Arg-159 and His-174 each contribute to the beta-D-fructose 1,6-bisphosphate site. His-181 functions as the Proton acceptor in the catalytic mechanism. Position 226 is a phosphotyrosine (Tyr-226). Residue Thr-235 participates in substrate binding.

Belongs to the LDH/MDH superfamily. LDH family. As to quaternary structure, homotetramer.

The protein resides in the cytoplasm. The catalysed reaction is (S)-lactate + NAD(+) = pyruvate + NADH + H(+). It participates in fermentation; pyruvate fermentation to lactate; (S)-lactate from pyruvate: step 1/1. Allosterically activated by fructose 1,6-bisphosphate (FBP). Functionally, catalyzes the conversion of lactate to pyruvate. In Oceanobacillus iheyensis (strain DSM 14371 / CIP 107618 / JCM 11309 / KCTC 3954 / HTE831), this protein is L-lactate dehydrogenase.